Reading from the N-terminus, the 586-residue chain is Probable zinc metalloprotease EGY3, chloroplastic (586 aa).

The transit peptide at 1-54 (MSSSSLVTSLLFSSSSSSNTATSTSSRRSFSLFSKNQYCKPSPLRRSSSLLLVR) directs the protein to the chloroplast. The span at 62-73 (EEKAAPAAESHH) shows a compositional bias: basic and acidic residues. The tract at residues 62–118 (EEKAAPAAESHHAGGGQDDAATASHHAVEGENGVADADGGGVKKSKEELEEEEQQEV) is disordered. The stretch at 103–195 (VKKSKEELEE…NTFKALDLNK (93 aa)) forms a coiled coil. The next 7 membrane-spanning stretches (helical) occupy residues 287–307 (LSAV…SGFF), 318–338 (VSDV…SEIA), 389–409 (ASAY…DGSL), 427–447 (PLLS…GNVL), 454–474 (VGVP…VTSL), 506–526 (VALG…WGLF), and 550–570 (YAWG…NGGG).

This sequence belongs to the peptidase M50B family.

The protein localises to the plastid. Its subcellular location is the chloroplast membrane. In terms of biological role, probable membrane-associated metalloprotease that may be involved in chloroplast development. The chain is Probable zinc metalloprotease EGY3, chloroplastic (EGY3) from Oryza sativa subsp. indica (Rice).